Consider the following 446-residue polypeptide: Argininosuccinate synthase (446 aa).

Residues 17–25 (AFSGGLDTS) and Ala-43 contribute to the ATP site. Tyr-99 serves as a coordination point for L-citrulline. Residues Gly-129 and Thr-131 each coordinate ATP. Residues Thr-131, Asn-135, and Asp-136 each contribute to the L-aspartate site. L-citrulline is bound at residue Asn-135. Asp-136 lines the ATP pocket. Positions 139 and 192 each coordinate L-citrulline. Asp-194 lines the ATP pocket. The L-citrulline site is built by Thr-201, Glu-203, and Glu-280.

The protein belongs to the argininosuccinate synthase family. Type 2 subfamily. In terms of assembly, homotetramer.

It is found in the cytoplasm. It catalyses the reaction L-citrulline + L-aspartate + ATP = 2-(N(omega)-L-arginino)succinate + AMP + diphosphate + H(+). It participates in amino-acid biosynthesis; L-arginine biosynthesis; L-arginine from L-ornithine and carbamoyl phosphate: step 2/3. The polypeptide is Argininosuccinate synthase (Burkholderia thailandensis (strain ATCC 700388 / DSM 13276 / CCUG 48851 / CIP 106301 / E264)).